Reading from the N-terminus, the 511-residue chain is 3-octaprenyl-4-hydroxybenzoate carboxy-lyase (511 aa).

Position 176 (asparagine 176) interacts with Mn(2+). Prenylated FMN is bound by residues 179–181 (IYR), 193–195 (RWL), and 198–199 (RG). Glutamate 242 contacts Mn(2+). The Proton donor role is filled by aspartate 311.

Belongs to the UbiD family. In terms of assembly, homohexamer. Prenylated FMN is required as a cofactor. Requires Mn(2+) as cofactor.

It is found in the cell membrane. The catalysed reaction is a 4-hydroxy-3-(all-trans-polyprenyl)benzoate + H(+) = a 2-(all-trans-polyprenyl)phenol + CO2. The protein operates within cofactor biosynthesis; ubiquinone biosynthesis. Functionally, catalyzes the decarboxylation of 3-octaprenyl-4-hydroxy benzoate to 2-octaprenylphenol, an intermediate step in ubiquinone biosynthesis. In Laribacter hongkongensis (strain HLHK9), this protein is 3-octaprenyl-4-hydroxybenzoate carboxy-lyase.